Consider the following 101-residue polypeptide: Small ribosomal subunit protein uS14 (101 aa).

Belongs to the universal ribosomal protein uS14 family. In terms of assembly, part of the 30S ribosomal subunit. Contacts proteins S3 and S10.

Binds 16S rRNA, required for the assembly of 30S particles and may also be responsible for determining the conformation of the 16S rRNA at the A site. The chain is Small ribosomal subunit protein uS14 from Nitrosomonas europaea (strain ATCC 19718 / CIP 103999 / KCTC 2705 / NBRC 14298).